The sequence spans 269 residues: Protein RKD1 (269 aa).

In terms of domain architecture, RWP-RK spans 106–195 (TTTTKKRRCR…EKMEGEENED (90 aa)). A coiled-coil region spans residues 175-216 (LQKLISNVKELEKMEGEENEDKLRNALEKLEKEKKTIEKLPD). The tract at residues 230–269 (CFKANHKRKRRSGMSTPITSSSSSASASSSSYSSVSGFER) is disordered. Positions 249-269 (SSSSSASASSSSYSSVSGFER) are enriched in low complexity.

The protein resides in the nucleus. In terms of biological role, putative transcription factor. This chain is Protein RKD1 (RKD1), found in Arabidopsis thaliana (Mouse-ear cress).